A 653-amino-acid chain; its full sequence is Thioredoxin domain-containing protein 3 homolog (653 aa).

The region spanning 9 to 114 (LQETLNTQEA…QETIQETLKN (106 aa)) is the Thioredoxin domain. Cysteine 38 and cysteine 41 form a disulfide bridge. The interval 155-299 (KQITVALIKP…FFFPDFKPPT (145 aa)) is NDK 1. The tract at residues 300–323 (YRSAKSAASRASGRRSKTPSQKPR) is disordered. Residues 301 to 310 (RSAKSAASRA) are compositionally biased toward low complexity. NDK stretches follow at residues 324 to 459 (LQRT…IFHV) and 459 to 597 (VEQT…QFDW). The interval 603 to 653 (QAEEGEVNETSGEQPTDEQSGETEKTEEDGEHEGAQSDQQQAVSEAMEKEE) is disordered. Residues 617–633 (PTDEQSGETEKTEEDGE) are compositionally biased toward acidic residues.

The protein in the C-terminal section; belongs to the NDK family. As to expression, testis-specific.

Its function is as follows. May be required during the final stages of sperm tail maturation. May act by reducing disulfide bonds within the sperm components. This is Thioredoxin domain-containing protein 3 homolog (CiIC3) from Ciona intestinalis (Transparent sea squirt).